The primary structure comprises 88 residues: LYR motif-containing protein 2 (88 aa).

A mitochondrion-targeting transit peptide spans 1-19 (MAASRLPPAALTLKQFMRR).

This sequence belongs to the complex I LYR family.

The protein resides in the mitochondrion. Functionally, involved in efficient integration of the N-module into mitochondrial respiratory chain complex I. This is LYR motif-containing protein 2 (Lyrm2) from Mus musculus (Mouse).